A 232-amino-acid polypeptide reads, in one-letter code: CMP-N,N'-diacetyllegionaminic acid synthase (232 aa).

The protein belongs to the CMP-NeuNAc synthase family.

The catalysed reaction is N,N-diacetyllegionaminate + CTP = CMP-N,N-diacetyllegionaminate + diphosphate. Its function is as follows. Involved in biosynthesis of legionaminic acid (5,7-diamino-3,5,7,9-tetradeoxy-D-glycero-D-galacto-non-2-ulosonic acid)(Leg), a sialic acid-like derivative that is incorporated into virulence-associated cell surface glycoconjugates such as lipopolysaccharide (LPS) which could be a key determinant in the ability of L.pneumophila to inhibit the fusion of phagosomes with lysosomes. LPS contains a majority alpha2,4-linked homomer of legionaminic acid. Catalyzes the conversion of N,N'-diacetyllegionaminic acid (Leg5Ac7Ac) and CTP into CMP-N,N'-diacetyllegionaminic acid (CMP-Leg5Ac7Ac). This chain is CMP-N,N'-diacetyllegionaminic acid synthase (neuA), found in Legionella pneumophila subsp. pneumophila (strain Philadelphia 1 / ATCC 33152 / DSM 7513).